The following is a 110-amino-acid chain: NADH-quinone oxidoreductase subunit K (110 aa).

The next 3 helical transmembrane spans lie at 13–33, 41–61, and 73–93; these read LNHY…GLFM, ILMS…AFSI, and IIIL…LLIY.

The protein belongs to the complex I subunit 4L family. NDH-1 is composed of 14 different subunits. Subunits NuoA, H, J, K, L, M, N constitute the membrane sector of the complex.

The protein resides in the cell inner membrane. The catalysed reaction is a quinone + NADH + 5 H(+)(in) = a quinol + NAD(+) + 4 H(+)(out). In terms of biological role, NDH-1 shuttles electrons from NADH, via FMN and iron-sulfur (Fe-S) centers, to quinones in the respiratory chain. The immediate electron acceptor for the enzyme in this species is believed to be ubiquinone. Couples the redox reaction to proton translocation (for every two electrons transferred, four hydrogen ions are translocated across the cytoplasmic membrane), and thus conserves the redox energy in a proton gradient. The protein is NADH-quinone oxidoreductase subunit K of Rickettsia felis (strain ATCC VR-1525 / URRWXCal2) (Rickettsia azadi).